Reading from the N-terminus, the 428-residue chain is Enolase (428 aa).

Residue glutamine 162 participates in (2R)-2-phosphoglycerate binding. The active-site Proton donor is the glutamate 204. Positions 241, 283, and 310 each coordinate Mg(2+). Lysine 335, arginine 364, serine 365, and lysine 386 together coordinate (2R)-2-phosphoglycerate. The active-site Proton acceptor is lysine 335.

The protein belongs to the enolase family. The cofactor is Mg(2+).

It is found in the cytoplasm. The protein localises to the secreted. It localises to the cell surface. The catalysed reaction is (2R)-2-phosphoglycerate = phosphoenolpyruvate + H2O. The protein operates within carbohydrate degradation; glycolysis; pyruvate from D-glyceraldehyde 3-phosphate: step 4/5. In terms of biological role, catalyzes the reversible conversion of 2-phosphoglycerate (2-PG) into phosphoenolpyruvate (PEP). It is essential for the degradation of carbohydrates via glycolysis. The polypeptide is Enolase (Rhodococcus erythropolis (strain PR4 / NBRC 100887)).